Here is a 422-residue protein sequence, read N- to C-terminus: 3-phosphoshikimate 1-carboxyvinyltransferase (422 aa).

Residues Lys20, Ser21, and Arg25 each coordinate 3-phosphoshikimate. Lys20 contacts phosphoenolpyruvate. The phosphoenolpyruvate site is built by Gly90 and Arg118. The 3-phosphoshikimate site is built by Ser161, Ser162, Gln163, Ser189, Asp305, and Lys332. Gln163 lines the phosphoenolpyruvate pocket. Asp305 serves as the catalytic Proton acceptor. Phosphoenolpyruvate contacts are provided by Arg336 and Arg378.

This sequence belongs to the EPSP synthase family. As to quaternary structure, monomer.

Its subcellular location is the cytoplasm. It carries out the reaction 3-phosphoshikimate + phosphoenolpyruvate = 5-O-(1-carboxyvinyl)-3-phosphoshikimate + phosphate. It participates in metabolic intermediate biosynthesis; chorismate biosynthesis. Its function is as follows. Catalyzes the transfer of the enolpyruvyl moiety of phosphoenolpyruvate (PEP) to the 5-hydroxyl of shikimate-3-phosphate (S3P) to produce enolpyruvyl shikimate-3-phosphate and inorganic phosphate. This chain is 3-phosphoshikimate 1-carboxyvinyltransferase, found in Nitrosopumilus maritimus (strain SCM1).